Here is a 1106-residue protein sequence, read N- to C-terminus: Voltage-dependent calcium channel subunit alpha-2/delta-1 (1106 aa).

The first 26 residues, 1-26, serve as a signal peptide directing secretion; sequence MAAGRPLAWTLTLWQAWLILIGPSSE. Residues 27 to 1076 lie on the Extracellular side of the membrane; sequence EPFPSAVTIK…VLEDYTDCGG (1050 aa). The N-linked (GlcNAc...) asparagine glycan is linked to Asn-94. Ser-121 carries the phosphoserine modification. N-linked (GlcNAc...) asparagine glycosylation is found at Asn-138 and Asn-186. Positions 255–432 constitute a VWFA domain; sequence DMLILVDVSG…INTQEYLDVL (178 aa). Residues Asp-261, Ser-263, and Ser-265 each contribute to the a divalent metal cation site. The MIDAS-like motif motif lies at 261-265; the sequence is DVSGS. Asn-326 and Asn-350 each carry an N-linked (GlcNAc...) asparagine glycan. An intrachain disulfide couples Cys-406 to Cys-1062. The 92-residue stretch at 448–539 folds into the Cache domain; the sequence is WTNVYLDALE…QPKPIGVGIP (92 aa). N-linked (GlcNAc...) asparagine glycosylation is found at Asn-615, Asn-784, and Asn-891. Residues 1077–1097 form a helical membrane-spanning segment; that stretch reads VSGLNPSLWSIIGIQFVLLWL. Residues 1098–1106 lie on the Cytoplasmic side of the membrane; sequence VSGSRHCLL.

Belongs to the calcium channel subunit alpha-2/delta family. As to quaternary structure, dimer formed of alpha-2-1 and delta-1 chains; disulfide-linked. Voltage-dependent calcium channels are multisubunit complexes, consisting of alpha-1 (CACNA1), alpha-2 (CACNA2D), beta (CACNB) and delta (CACNA2D) subunits in a 1:1:1:1 ratio. Proteolytically processed into subunits alpha-2-1 and delta-1 that are disulfide-linked. As to expression, skeletal muscle.

The protein localises to the membrane. Its subcellular location is the cell membrane. Its function is as follows. The alpha-2/delta subunit of voltage-dependent calcium channels regulates calcium current density and activation/inactivation kinetics of the calcium channel. Plays an important role in excitation-contraction coupling. The sequence is that of Voltage-dependent calcium channel subunit alpha-2/delta-1 (CACNA2D1) from Oryctolagus cuniculus (Rabbit).